The primary structure comprises 892 residues: Leucine--tRNA ligase (892 aa).

The 'HIGH' region signature appears at Pro-42–His-52. The short motif at Thr-640–Ser-644 is the 'KMSKS' region element. Lys-643 lines the ATP pocket.

It belongs to the class-I aminoacyl-tRNA synthetase family.

It is found in the cytoplasm. The catalysed reaction is tRNA(Leu) + L-leucine + ATP = L-leucyl-tRNA(Leu) + AMP + diphosphate. The protein is Leucine--tRNA ligase of Albidiferax ferrireducens (strain ATCC BAA-621 / DSM 15236 / T118) (Rhodoferax ferrireducens).